The following is a 240-amino-acid chain: 2,3-bisphosphoglycerate-dependent phosphoglycerate mutase (240 aa).

Substrate is bound by residues 5–12 (RHGESVWN), 18–19 (TG), R57, 84–87 (ERHY), K95, 111–112 (RR), and 180–181 (GN). H6 serves as the catalytic Tele-phosphohistidine intermediate. E84 functions as the Proton donor/acceptor in the catalytic mechanism.

It belongs to the phosphoglycerate mutase family. BPG-dependent PGAM subfamily. In terms of assembly, homodimer.

The catalysed reaction is (2R)-2-phosphoglycerate = (2R)-3-phosphoglycerate. It participates in carbohydrate degradation; glycolysis; pyruvate from D-glyceraldehyde 3-phosphate: step 3/5. Functionally, catalyzes the interconversion of 2-phosphoglycerate and 3-phosphoglycerate. This is 2,3-bisphosphoglycerate-dependent phosphoglycerate mutase from Nitrosococcus oceani (strain ATCC 19707 / BCRC 17464 / JCM 30415 / NCIMB 11848 / C-107).